The following is a 1074-amino-acid chain: BRD4-interacting chromatin-remodeling complex-associated protein-like (1074 aa).

4 disordered regions span residues 542–603, 620–689, 834–874, and 887–952; these read AVSS…NTPG, TSPI…GQKR, TPLD…HDQF, and GNIS…SKLP. Polar residues-rich tracts occupy residues 544–576, 591–603, 620–629, and 660–680; these read SSASTAHPTLGPTVQSGAPGSNFTGDQLTQANR, ASKSPSTLSNTPG, TSPIPTSKTT, and GATQAQPESSVGSSPSQTAVQ. Position 621 is a phosphoserine (Ser-621). 3 stretches are compositionally biased toward basic and acidic residues: residues 889–904, 913–925, and 934–948; these read ISKKSEGHSRTLKFDR, PPEDKGGRRDPAK, and EGHRKSLPRPDHGSE. A Phosphoserine modification is found at Ser-976.

In terms of assembly, component of the multiprotein chromatin-remodeling complexes SWI/SNF: SWI/SNF-A (BAF), SWI/SNF-B (PBAF) and related complexes. The canonical complex contains a catalytic subunit (either SMARCA4/BRG1/BAF190A or SMARCA2/BRM/BAF190B) and at least SMARCE1, ACTL6A/BAF53, SMARCC1/BAF155, SMARCC2/BAF170, and SMARCB1/SNF5/BAF47. Other subunits specific to each of the complexes may also be present permitting several possible combinations developmentally and tissue specific. Component of the SWI/SNF (GBAF) subcomplex, which includes at least BICRA or BICRAL (mutually exclusive), BRD9, SS18, the core BAF subunits, SMARCA2/BRM, SMARCA4/BRG1/BAF190A, ACTL6A/BAF53, SMARCC1/BAF155, and SMARCD1/BAF60A.

Functionally, component of SWI/SNF chromatin remodeling subcomplex GBAF that carries out key enzymatic activities, changing chromatin structure by altering DNA-histone contacts within a nucleosome in an ATP-dependent manner. In Mus musculus (Mouse), this protein is BRD4-interacting chromatin-remodeling complex-associated protein-like.